The chain runs to 389 residues: Apicidin F cluster transcription factor apf2 (389 aa).

Composition is skewed to polar residues over residues 1–13 (MSPP…TITD) and 75–84 (PDSATPKPSL). Disordered regions lie at residues 1 to 27 (MSPP…VAQR), 65 to 84 (PQSV…KPSL), and 219 to 239 (EVPN…TKQP). The basic DNA-binding region stretch occupies residues 12–38 (TDANERRKAQNRVAQRNYRSRQKLRVE). 4 ANK repeats span residues 241 to 270 (EFKT…NIDT), 274 to 303 (HGRT…DLLM), 307 to 336 (SGVT…QQDR), and 357 to 386 (QNMT…DVNI).

Belongs to the bZIP family. Highly divergent.

It localises to the nucleus. Transcription factor that regulates the expression of the gene cluster that mediates the biosynthesis of apicidin F. Binds to the eight-base-pair motif 5'-TGACGTGA-3' called the 'Api-box' that is found in all promoters of the apicidin F cluster except in the promoter region of apf2 itself. This Gibberella fujikuroi (strain CBS 195.34 / IMI 58289 / NRRL A-6831) (Bakanae and foot rot disease fungus) protein is Apicidin F cluster transcription factor apf2.